A 522-amino-acid chain; its full sequence is Lysophospholipid acyltransferase LPCAT4 (522 aa).

2 consecutive transmembrane segments (helical) span residues 43–63 and 92–112; these read ILGFTLFPLRFLLAAIFLFLM and HLIYLLSRTMFFMCGFHWITI. Positions 130–135 match the HXXXXD motif motif; that stretch reads HSTFFD. Residues Asn-166 and Asn-517 are each glycosylated (N-linked (GlcNAc...) asparagine). Positions 496–522 are disordered; it reads GRRKPPHIQQNGGCSGKNNPRNQSKMD. A compositionally biased stretch (polar residues) spans 503–522; sequence IQQNGGCSGKNNPRNQSKMD.

It belongs to the 1-acyl-sn-glycerol-3-phosphate acyltransferase family.

The protein resides in the endoplasmic reticulum membrane. The enzyme catalyses a 1-acyl-sn-glycero-3-phosphoethanolamine + an acyl-CoA = a 1,2-diacyl-sn-glycero-3-phosphoethanolamine + CoA. It catalyses the reaction a 1-O-(1Z-alkenyl)-sn-glycero-3-phosphoethanolamine + an acyl-CoA = a 1-O-(1Z-alkenyl)-2-acyl-sn-glycero-3-phosphoethanolamine + CoA. It carries out the reaction a 1-acyl-sn-glycero-3-phosphocholine + an acyl-CoA = a 1,2-diacyl-sn-glycero-3-phosphocholine + CoA. The catalysed reaction is a 1-O-alkyl-sn-glycero-3-phosphocholine + acetyl-CoA = a 1-O-alkyl-2-acetyl-sn-glycero-3-phosphocholine + CoA. The enzyme catalyses a 1-acyl-sn-glycero-3-phospho-L-serine + an acyl-CoA = a 1,2-diacyl-sn-glycero-3-phospho-L-serine + CoA. It participates in lipid metabolism; phospholipid metabolism. Functionally, displays acyl-CoA-dependent lysophospholipid acyltransferase activity with a subset of lysophospholipids as substrates. Prefers long chain acyl-CoAs (C16, C18) as acyl donors. This chain is Lysophospholipid acyltransferase LPCAT4 (lpcat4), found in Xenopus tropicalis (Western clawed frog).